We begin with the raw amino-acid sequence, 176 residues long: Dual-action ribosomal maturation protein DarP (176 aa).

Polar residues predominate over residues 1–10; that stretch reads MTVPNHQQDI. A disordered region spans residues 1-22; sequence MTVPNHQQDISDSDLESRPSKT.

It belongs to the DarP family.

It is found in the cytoplasm. Its function is as follows. Member of a network of 50S ribosomal subunit biogenesis factors which assembles along the 30S-50S interface, preventing incorrect 23S rRNA structures from forming. Promotes peptidyl transferase center (PTC) maturation. This is Dual-action ribosomal maturation protein DarP from Nitrosomonas eutropha (strain DSM 101675 / C91 / Nm57).